We begin with the raw amino-acid sequence, 201 residues long: Potassium-transporting ATPase KdpC subunit (201 aa).

A helical membrane pass occupies residues Pro-7–Gly-29.

Belongs to the KdpC family. In terms of assembly, the system is composed of three essential subunits: KdpA, KdpB and KdpC.

It localises to the cell inner membrane. Part of the high-affinity ATP-driven potassium transport (or Kdp) system, which catalyzes the hydrolysis of ATP coupled with the electrogenic transport of potassium into the cytoplasm. This subunit acts as a catalytic chaperone that increases the ATP-binding affinity of the ATP-hydrolyzing subunit KdpB by the formation of a transient KdpB/KdpC/ATP ternary complex. The chain is Potassium-transporting ATPase KdpC subunit from Methylobacterium radiotolerans (strain ATCC 27329 / DSM 1819 / JCM 2831 / NBRC 15690 / NCIMB 10815 / 0-1).